Here is a 65-residue protein sequence, read N- to C-terminus: Temporin-LK1 (65 aa).

The first 22 residues, 1 to 22 (MFTMKKSLLLLFFLGAINLPLC), serve as a signal peptide directing secretion. A propeptide spanning residues 23 to 44 (QEERNAEEERRDGDDEGSVEVQ) is cleaved from the precursor. Phe-63 is subject to Phenylalanine amide.

In terms of tissue distribution, expressed by the skin glands.

The protein resides in the secreted. Its function is as follows. Has antimicrobial activity against Gram-positive bacteria S.aureus ATCC 2592 (MIC=2.5 uM), S.aureus ATCC 43300 (MIC=2.5 uM) and B.subtilis (MIC=15.0 uM), against Gram-negative bacteria E.coli ML-35P (MIC=30.0 uM), P.aeruginosa PA01 (MIC=2.5 uM) and P.aeruginosa ATCC 27853 (MIC=2.5 uM) and against fungus C.albicans ATCC 2002 (MIC=5.0 uM). This chain is Temporin-LK1, found in Limnonectes kuhlii (Kuhl's Creek frog).